The following is a 716-amino-acid chain: ATP-dependent DNA helicase DinG (716 aa).

The Helicase ATP-binding domain occupies Ala17–Thr294. Ala54–Thr61 provides a ligand contact to ATP. Cys120 serves as a coordination point for [4Fe-4S] cluster. Positions Glu131–Gln134 match the DEAH box motif. Cys194, Cys199, and Cys205 together coordinate [4Fe-4S] cluster. The DEAH box motif lies at Asp248 to His251. One can recognise a Helicase C-terminal domain in the interval His517–Pro698.

It belongs to the helicase family. DinG subfamily. Type 1 sub-subfamily. It depends on [4Fe-4S] cluster as a cofactor.

The catalysed reaction is Couples ATP hydrolysis with the unwinding of duplex DNA at the replication fork by translocating in the 5'-3' direction. This creates two antiparallel DNA single strands (ssDNA). The leading ssDNA polymer is the template for DNA polymerase III holoenzyme which synthesizes a continuous strand.. The enzyme catalyses ATP + H2O = ADP + phosphate + H(+). Functionally, DNA-dependent ATPase and 5'-3' DNA helicase. Unwinds D-loops, R-loops, forked DNA and G-quadruplex DNA. This Escherichia coli O157:H7 protein is ATP-dependent DNA helicase DinG.